The primary structure comprises 464 residues: Glutamate--tRNA ligase (464 aa).

The short motif at 9–19 (PSPTGYLHIGG) is the 'HIGH' region element. Residues 242–246 (KISKR) carry the 'KMSKS' region motif. Lys-245 is a binding site for ATP.

This sequence belongs to the class-I aminoacyl-tRNA synthetase family. Glutamate--tRNA ligase type 1 subfamily. As to quaternary structure, monomer.

It localises to the cytoplasm. The enzyme catalyses tRNA(Glu) + L-glutamate + ATP = L-glutamyl-tRNA(Glu) + AMP + diphosphate. In terms of biological role, catalyzes the attachment of glutamate to tRNA(Glu) in a two-step reaction: glutamate is first activated by ATP to form Glu-AMP and then transferred to the acceptor end of tRNA(Glu). This Neisseria meningitidis serogroup C / serotype 2a (strain ATCC 700532 / DSM 15464 / FAM18) protein is Glutamate--tRNA ligase.